Here is a 389-residue protein sequence, read N- to C-terminus: Capreomycidine synthase (389 aa).

Lys230 carries the post-translational modification N6-(pyridoxal phosphate)lysine.

Belongs to the class-II pyridoxal-phosphate-dependent aminotransferase family. It depends on pyridoxal 5'-phosphate as a cofactor.

The enzyme catalyses (2S,3S)-hydroxyarginine = (2S,3R)-capreomycidine + H2O. It functions in the pathway antibiotic biosynthesis. Functionally, involved in the biosynthesis of capreomycidine, an unusual amino acid used by non-ribosomal peptide synthases (NRPS) to make the tuberactinomycin class of peptide antibiotic such as viomycin and capreomycin. Catalyzes the dehydration of the C3 hydroxyl of (3S)-hydroxy-(2S)-arginine and the intramolecular cyclization to yield (2S,3R)-capreomycidine. The sequence is that of Capreomycidine synthase from Streptomyces vinaceus.